A 154-amino-acid polypeptide reads, in one-letter code: Superoxide dismutase [Cu-Zn] (154 aa).

Cu cation is bound by residues His-47, His-49, and His-64. Cys-58 and Cys-147 are disulfide-bonded. Zn(2+) contacts are provided by His-64, His-72, His-81, and Asp-84. His-121 is a binding site for Cu cation. Position 144 (Arg-144) interacts with substrate.

Belongs to the Cu-Zn superoxide dismutase family. Homodimer. The cofactor is Cu cation. Zn(2+) serves as cofactor.

The protein resides in the cytoplasm. It carries out the reaction 2 superoxide + 2 H(+) = H2O2 + O2. Destroys radicals which are normally produced within the cells and which are toxic to biological systems. This chain is Superoxide dismutase [Cu-Zn] (SOD1), found in Claviceps purpurea (strain 20.1) (Ergot fungus).